A 340-amino-acid polypeptide reads, in one-letter code: uncharacterized protein (340 aa).

2 helical membrane-spanning segments follow: residues 162–182 (PLVP…VLAG) and 239–259 (FWIA…IVVP).

The protein localises to the cell membrane. This is an uncharacterized protein from Mycobacterium tuberculosis (strain CDC 1551 / Oshkosh).